Here is a 421-residue protein sequence, read N- to C-terminus: 3-oxoacyl-[acyl-carrier-protein] synthase 2 (421 aa).

A Ketosynthase family 3 (KS3) domain is found at 1-417; that stretch reads MRRVVITGTG…GTNASLILRR (417 aa). Residues cysteine 170, histidine 311, and histidine 347 each act as for beta-ketoacyl synthase activity in the active site.

It belongs to the thiolase-like superfamily. Beta-ketoacyl-ACP synthases family. As to quaternary structure, homodimer.

The catalysed reaction is a fatty acyl-[ACP] + malonyl-[ACP] + H(+) = a 3-oxoacyl-[ACP] + holo-[ACP] + CO2. The enzyme catalyses (9Z)-hexadecenoyl-[ACP] + malonyl-[ACP] + H(+) = 3-oxo-(11Z)-octadecenoyl-[ACP] + holo-[ACP] + CO2. Its pathway is lipid metabolism; fatty acid biosynthesis. Its function is as follows. Involved in the type II fatty acid elongation cycle. Catalyzes the elongation of a wide range of acyl-ACP by the addition of two carbons from malonyl-ACP to an acyl acceptor. Can efficiently catalyze the conversion of palmitoleoyl-ACP (cis-hexadec-9-enoyl-ACP) to cis-vaccenoyl-ACP (cis-octadec-11-enoyl-ACP), an essential step in the thermal regulation of fatty acid composition. The sequence is that of 3-oxoacyl-[acyl-carrier-protein] synthase 2 (fabF) from Rhizobium meliloti (strain 1021) (Ensifer meliloti).